Consider the following 1802-residue polypeptide: MDNSMMDSTLRRILFFSNEFPSDDLKDLFRRLDQHSKDRRFRLLSIFLEESTAILKDEVSKLPRPLKELVPPFNSVLSLVDVDFRQGPLGAAMESSMLTILELGLFIGHYESEDTEWDLVPGQSVLAGLSIGILAAAAVALSSSLADVAKTGAEAVRVSFRLGVYVADISTKLEAPQSDGTLSSWAHVVTEMTEASVQDELKQFNTGTHSPELTKVFVSAADKTSVSVSGPPSRIKAAFQHSPVLRYSKSLPLPVYDGLCHASHLYTRSDIDSIINSSESVILPDRSVRLALLSSQTGKPFVAKTASDLFLEIGTELLTGTIYLDNVTAGIVQHLQPQSKETSSCQIDSFRTSLVLRGIHSAVEAELSRDRQLTRRDLVSWISRDFGPRRPRSQASSKLAIVGMACRLPGGANDLDLFWKLLEEGRDTLTTVPPDRFDLNTHYDPTGKTENATQTPYGNFIDRPGFFDAGFFNMSPREAEQTDPMQRLALVTAYEALEMAGVVPGRTPSTHPSRIGTFYGQASDDWRELNASQNISTYAVPGGERSFGNGRINYFFKFSGPSFNLDTACSSGLAAVQAACSALWAGEVDTAIAGGLNVITDPDNYCGLGNAHFLSKTGQCKVWDKDADGYCRADGIGSVVIKRLEDAEADNDNILAVVLGASTNHSAEAISITHPHAGAQKANYRQVLNQAGVNPIDVSYIELHGTGTQAGDAVESESVSDIFAPVTPRRRPDQRLYLGAVKSNIGHGEAAAGIASLLKALLVYQKNLIPKHIGIKSEINPTIPKDLERRNVGLAMQNTPWPRPAGKKRLAVVNSFGAHGGNTTLLLEDAPERVKIQGTEDRITHSILLSAKSKTSLQANMESLLSYLDQHPETSLADLAYTTSSRRMHHNMRFGTLVSSISGLQKMLRSQLDNPNFASEIRPVPNEAPSVILAFTGQGAYYHGMGSELFAEFPYFRAQVQQLDRLAQRLGFPSVVPVIENRIEDAPSSPILTQLSVVILEIALARFWSLLGVSISAVIGHSLGEYAALAVAGVISAADAIYLVGRRAQLVEERCAQASHSMLSVRASEDAIQEMLAVELETASITYEVSCCNTNQDTVIGGPKGEINDIRRALEAKSIKCTILDVPYAFHTAQMNPILDDLETLAKAVPFKAPSIPVISPLLATVIYDVKSLDANYLRRATRETVDFAAAIEAAQDMGLVDSKTIWIDVGPHPICAGLVRSMIPSASAIPSCRRNEDSIATISKGLVTLYLAGLTPSWVEFFKPREREYSLLYLPKYRWNETDYWIPYIGTWTLDKAHLKHGTKPKTPFSGSMSRPSALRTSLVHQITAETVEATTATLHTISDMQHPDFLEAIHGHTMNKCGVATSSIWSDMAFTVGEYLYRRLVPNTKDVHMNLTDVEVLHAQVASKTKGSVQPLVLRAHLDLSTNSMSLAWFNADGETGECAAESFATATIRFEDPEAWRKDWARLAHLVRGRIEVLEQRATEGKASRLSKPLAYALFKNVVDYADRYRGMDSVVLDELEAMAEVTLVPERYGTWHTPPHWIDSVSHLAGLVMNGSDASNTRDYFFVTPGCDSFRLLKKLEPGARYRSYVRMSPLPEDPNMHSGDVYILQGEEIVGMVGMIRFRRVPRLLMDRFFSPPTTTSVAVPVPPLTGATMKCKDITQTAPALPTPAPPIVVSSPVVSSTMACNIPEPAPLLATSSKSSTPKESPIVTPAESERAEPVDNSMTSQCLRLMARETGLEVEALTADASFVQLGVDSLMSLVLSEKFRAELGVEIKSSLFLECPTIGEMTAWIEEYC.

Positions 27–261 are N-terminal acylcarrier protein transacylase domain (SAT); it reads DLFRRLDQHS…PLPVYDGLCH (235 aa). Residues 396–829 enclose the Ketosynthase family 3 (KS3) domain; that stretch reads SSKLAIVGMA…GGNTTLLLED (434 aa). Residues Cys-569, His-704, and His-747 each act as for beta-ketoacyl synthase activity in the active site. Residues 935 to 1235 form a malonyl-CoA:ACP transacylase (MAT) domain region; that stretch reads FTGQGAYYHG…SASAIPSCRR (301 aa). The product template (PT) domain stretch occupies residues 1322 to 1641; it reads TSLVHQITAE…RLLMDRFFSP (320 aa). An N-terminal hotdog fold region spans residues 1326-1462; the sequence is HQITAETVEA…ATIRFEDPEA (137 aa). Residues 1326–1636 form the PKS/mFAS DH domain; it reads HQITAETVEA…FRRVPRLLMD (311 aa). The active-site Proton acceptor; for dehydratase activity is the His-1358. Residues 1490-1636 form a C-terminal hotdog fold region; the sequence is ASRLSKPLAY…FRRVPRLLMD (147 aa). The Proton donor; for dehydratase activity role is filled by Asp-1547. The tract at residues 1699 to 1729 is disordered; that stretch reads LLATSSKSSTPKESPIVTPAESERAEPVDNS. Residues 1702-1713 are compositionally biased toward low complexity; that stretch reads TSSKSSTPKESP. Residues 1725 to 1802 form the Carrier domain; it reads PVDNSMTSQC…EMTAWIEEYC (78 aa). O-(pantetheine 4'-phosphoryl)serine is present on Ser-1762.

Requires pantetheine 4'-phosphate as cofactor.

It functions in the pathway secondary metabolite biosynthesis. In terms of biological role, non-reducing polyketide synthase; part of the gene cluster that mediates the biosynthesis of neosartoricin B, a prenylated anthracenone that probably exhibits T-cell antiproliferative activity, suggestive of a physiological role as an immunosuppressive agent. The non-reducing polyketide synthase nscA probably synthesizes and cyclizes the decaketide backbone. The hydrolase nscB then mediates the product release through hydrolysis followed by spontaneous decarboxylation. The prenyltransferase nscD catalyzes the addition of the dimethylallyl group to the aromatic C5. The FAD-dependent monooxygenase nscC is then responsible for the stereospecific hydroxylation at C2. Neosartoricin B can be converted into two additional compounds neosartoricins C and D. Neosartoricin C is a spirocyclic compound that is cyclized through the attack of C3 hydroxyl on C14, followed by dehydration. On the other hand, neosartoricin D is a further cyclized compound in which attack of C2 on C14 in neosartoricin C results in the formation of the acetal-containing dioxabicyclo-octanone ring. Both of these compounds are novel and possibly represent related metabolites of the gene cluster. This chain is Non-reducing polyketide synthase nscA, found in Trichophyton tonsurans (strain CBS 112818) (Scalp ringworm fungus).